We begin with the raw amino-acid sequence, 359 residues long: Spermine synthase (359 aa).

Residues 53 to 304 (SGWFSEPHPR…GVIGFVLCST (252 aa)) enclose the PABS domain. Residue Gln-99 coordinates S-adenosyl 3-(methylsulfanyl)propylamine. Tyr-129 serves as a coordination point for spermidine. Gln-130 serves as a coordination point for S-adenosyl 3-(methylsulfanyl)propylamine. Residue Asp-154 coordinates spermidine. S-adenosyl 3-(methylsulfanyl)propylamine contacts are provided by residues Glu-174 and 205–206 (DA). The active-site Proton acceptor is the Asp-224. Position 292 (Tyr-292) interacts with putrescine.

It belongs to the spermidine/spermine synthase family. In terms of assembly, heterodimer. Component of a multiprotein complex. Interacts with SPDSYN1 and SPDSYN2. In terms of tissue distribution, expressed predominantly in stem internodes, flower buds and roots.

The catalysed reaction is S-adenosyl 3-(methylsulfanyl)propylamine + spermidine = spermine + S-methyl-5'-thioadenosine + H(+). It participates in amine and polyamine biosynthesis; spermine biosynthesis; spermine from spermidine: step 1/1. The sequence is that of Spermine synthase (SPMS) from Arabidopsis thaliana (Mouse-ear cress).